The chain runs to 286 residues: tRNA (guanine-N(7)-)-methyltransferase (286 aa).

S-adenosyl-L-methionine contacts are provided by residues Gly-91, 114 to 115 (EI), 158 to 159 (NS), and Leu-178. Asp-181 is a catalytic residue. 256–258 (TEE) is a binding site for S-adenosyl-L-methionine.

It belongs to the class I-like SAM-binding methyltransferase superfamily. TrmB family. In terms of assembly, forms a complex with TRM82.

It is found in the nucleus. The catalysed reaction is guanosine(46) in tRNA + S-adenosyl-L-methionine = N(7)-methylguanosine(46) in tRNA + S-adenosyl-L-homocysteine. It participates in tRNA modification; N(7)-methylguanine-tRNA biosynthesis. Catalyzes the formation of N(7)-methylguanine at position 46 (m7G46) in tRNA. The sequence is that of tRNA (guanine-N(7)-)-methyltransferase from Cryptococcus neoformans var. neoformans serotype D (strain B-3501A) (Filobasidiella neoformans).